Consider the following 471-residue polypeptide: MATMSSAAVEVISKETIKPRNPTPYQLRNYNMSLLDQYSSLVYVPIILFYPAASDANSTGSKHHDDLHLLKRSLSETLVHFYPMAGRMKDNMTVDCNDEGIDFFEVRIKGRMCDFMMKSDAHLSLLLPSEVASTNFVKEAQVIVQVNMFDCGGTAICFCISNKIADACTMITFIRSLAGTTNIARRGSSIAAPTTNQNLVPSFDSTSLFPPSEQLASQVSYPTQDSTSVDKLVSKRFVFDAAKITSAREKLQSLMHDKYKCHRPTRVEVVSALIWKSAVKSAPPGSISTVTHAMNFRKKMDPPLQDASFGNLCVVVTAVLPATTATTTNPATKKVSSTSNEEQVALDELSDFVALLRREIDKVKGDKGCMEKIIQKFIYGHDASVAKDSDVEDKVTALFMTSWCKFGFYEADFGWGTPVWVTTVPLIEPKYKNMVFMNDMKCGEGIEVWVNFLEDDMTKFEHHLREILQLF.

The protein belongs to the plant acyltransferase family.

It catalyses the reaction (13S,14R)-1,13-dihydroxy-N-methylcanadine + acetyl-CoA = (13S,14R)-13-O-acetyl-1-hydroxy-N-methylcanadine + CoA. The protein operates within alkaloid biosynthesis. In terms of biological role, acetyltransferase involved in the biosynthesis of the benzylisoquinoline alkaloid noscapine. Converts (13S,14R)-1,13-dihydroxy-N-methylcanadine to (13S,14R)-13-O-acetyl-1-hydroxy-N-methylcanadine. This chain is (13S,14R)-1,13-dihydroxy-N-methylcanadine 13-O-acetyltransferase AT1, found in Papaver somniferum (Opium poppy).